The sequence spans 223 residues: Small ribosomal subunit protein uS3 (223 aa).

The KH type-2 domain maps to 38–106; the sequence is LKAELKEKLK…EVYIDIQEVH (69 aa).

This sequence belongs to the universal ribosomal protein uS3 family. In terms of assembly, part of the 30S ribosomal subunit. Forms a tight complex with proteins S10 and S14.

Binds the lower part of the 30S subunit head. Binds mRNA in the 70S ribosome, positioning it for translation. This chain is Small ribosomal subunit protein uS3, found in Koribacter versatilis (strain Ellin345).